We begin with the raw amino-acid sequence, 159 residues long: Ribosomal RNA large subunit methyltransferase H (159 aa).

S-adenosyl-L-methionine contacts are provided by residues Leu-76, Gly-108, and 127 to 132 (FSKMTF).

It belongs to the RNA methyltransferase RlmH family. Homodimer.

The protein resides in the cytoplasm. The enzyme catalyses pseudouridine(1915) in 23S rRNA + S-adenosyl-L-methionine = N(3)-methylpseudouridine(1915) in 23S rRNA + S-adenosyl-L-homocysteine + H(+). Specifically methylates the pseudouridine at position 1915 (m3Psi1915) in 23S rRNA. This is Ribosomal RNA large subunit methyltransferase H from Staphylococcus aureus (strain Mu3 / ATCC 700698).